The chain runs to 367 residues: Phosphoribosylaminoimidazole-succinocarboxamide synthase (367 aa).

Belongs to the SAICAR synthetase family.

The enzyme catalyses 5-amino-1-(5-phospho-D-ribosyl)imidazole-4-carboxylate + L-aspartate + ATP = (2S)-2-[5-amino-1-(5-phospho-beta-D-ribosyl)imidazole-4-carboxamido]succinate + ADP + phosphate + 2 H(+). It participates in purine metabolism; IMP biosynthesis via de novo pathway; 5-amino-1-(5-phospho-D-ribosyl)imidazole-4-carboxamide from 5-amino-1-(5-phospho-D-ribosyl)imidazole-4-carboxylate: step 1/2. The sequence is that of Phosphoribosylaminoimidazole-succinocarboxamide synthase from Saccharophagus degradans (strain 2-40 / ATCC 43961 / DSM 17024).